We begin with the raw amino-acid sequence, 491 residues long: Chromosomal replication initiator protein DnaA (491 aa).

Residues 1–69 (MTTWDKCLKK…TIQECHGNDL (69 aa)) form a domain I, interacts with DnaA modulators region. A domain II region spans residues 69-154 (LIIEYSNKKF…KEDEEYSFGL (86 aa)). Residues 155–371 (PLKEKYVFDS…GALNRVLTTS (217 aa)) are domain III, AAA+ region. 4 residues coordinate ATP: Gly-199, Gly-201, Lys-202, and Thr-203. The interval 372-491 (KFNHKDPTIE…YELLLDKISR (120 aa)) is domain IV, binds dsDNA.

It belongs to the DnaA family. In terms of assembly, oligomerizes as a right-handed, spiral filament on DNA at oriC.

It localises to the cytoplasm. Functionally, plays an essential role in the initiation and regulation of chromosomal replication. ATP-DnaA binds to the origin of replication (oriC) to initiate formation of the DNA replication initiation complex once per cell cycle. Binds the DnaA box (a 9 base pair repeat at the origin) and separates the double-stranded (ds)DNA. Forms a right-handed helical filament on oriC DNA; dsDNA binds to the exterior of the filament while single-stranded (ss)DNA is stabiized in the filament's interior. The ATP-DnaA-oriC complex binds and stabilizes one strand of the AT-rich DNA unwinding element (DUE), permitting loading of DNA polymerase. After initiation quickly degrades to an ADP-DnaA complex that is not apt for DNA replication. Binds acidic phospholipids. The protein is Chromosomal replication initiator protein DnaA of Francisella tularensis subsp. holarctica (strain FTNF002-00 / FTA).